Reading from the N-terminus, the 666-residue chain is Protein scarlet (666 aa).

Over 1-417 (MSDSDSKRID…TIQWLRFIQK (417 aa)) the chain is Cytoplasmic. The tract at residues 26–55 (PVGSTIEVPSLDSTPKLSKRNSSERSLPLR) is disordered. The ABC transporter domain occupies 69–316 (LVWRDLCVYT…FANHGYYCPE (248 aa)). An ATP-binding site is contributed by 108–115 (GSSGSGKT). The helical transmembrane segment at 418-438 (IAMAFIIGACFAGTTEPSQLG) threads the bilayer. The Extracellular segment spans residues 439–444 (VQAVQG). A helical transmembrane segment spans residues 445-465 (ALFIMISENTYHPMYSVLNLF). Topologically, residues 466–490 (PQGFPLFMRETRSGLYSTGQYYAAN) are cytoplasmic. The helical transmembrane segment at 491–511 (ILALLPGMIIEPLIFVIICYW) threads the bilayer. The Extracellular portion of the chain corresponds to 512 to 518 (LTGLRST). Residues 519–539 (FYAFGVTAMCVVLVMNVATAC) traverse the membrane as a helical segment. At 540 to 551 (GCFFSTAFNSVP) the chain is on the cytoplasmic side. The helical transmembrane segment at 552–572 (LAMAYLVPLDYIFMITSGIFI) threads the bilayer. The Extracellular segment spans residues 573-639 (QVNSLPVAFW…YSFNESNVYR (67 aa)). N-linked (GlcNAc...) asparagine glycosylation is found at asparagine 607 and asparagine 633. The chain crosses the membrane as a helical span at residues 640–660 (NLLAMVGLYFGFHLLGYYCLW). Residues 661–666 (RRARKL) are Cytoplasmic-facing.

It belongs to the ABC transporter superfamily. ABCG family. Eye pigment precursor importer (TC 3.A.1.204) subfamily. May form a heterodimer with w/white. In terms of tissue distribution, expressed in the eye, specifically in primary pigment cells, secondary pigment cells and retinula cells (at protein level).

The protein resides in the cytoplasmic vesicle membrane. The enzyme catalyses L-kynurenine(out) + ATP + H2O = L-kynurenine(in) + ADP + phosphate + H(+). Functionally, ATP-dependent transporter of the ATP-binding cassette (ABC) family which transports various molecules including bioamines, neurotransmitters and metabolic intermediates. In the eye and probably in association with w/white, required for the transport of the eye brown pigment precursors, kynurenine and probably tryptophan, into pigment cell granules. In Malpighian tubules and pupal eyes, involved in kynurenine transport. Probably in association with w/white, plays a role in zinc storage granule biogenesis in Malpighian tubule principal epithelial cells. In Drosophila melanogaster (Fruit fly), this protein is Protein scarlet.